The following is a 381-amino-acid chain: ELMO domain-containing protein 3 (381 aa).

The region spanning Thr170 to Pro324 is the ELMO domain.

Both isoform 1 and isoform 2 are widely expressed.

The protein localises to the cell projection. Its subcellular location is the stereocilium. It is found in the kinocilium. The protein resides in the cytoplasm. It localises to the cytoskeleton. In terms of biological role, acts as a GTPase-activating protein (GAP) for ARL2 with low specific activity. The protein is ELMO domain-containing protein 3 (Elmod3) of Mus musculus (Mouse).